The following is a 519-amino-acid chain: MTFASFLINFYSVIPRLNFKFHWTNDVFNLEWSSEYFQALALVACLGAAVSLLLLVTIIIVWICQACHKNETTGKTRRRVRRLSTVLFIISVLCFFMLGVCLFANEHVNRGMSISINSIINTKKSYQISTAQISQFQEAALNTTVHLKNLEDTVHVESKKTKNATIVQQIDQILTNITDEIDIIAKNGKLFQAKHGDDIGKLEKIRKVLSLYESERWAFLVILLSITMVVLFTGVVAFCKQSKKGAVVFSAIGFFIFVVVWLLISISLPLTIALADFCRDGDQVTRKNLGNLYETVQFYNTCVPVTTHDNLPLPVARHVALLNNIPANKSQLDRLMEVAFNSSAAIVNSSSAVGDDITKMLKLAGAVSSSSSCYVFHDDVVNFYYGTCNQSVAGMSIYMLSILLLGVFLFILLIVVSKTWNLFSRLPNEYTEVDEDDPFFPRGVNDSTIPVDIYGTHVYNPRTRDRTEPSTNTTSGTADEPNAPLWSQNVTVPLVSNSMSRQPFMSDHPYNNYEDRYNM.

Over 1–42 the chain is Extracellular; the sequence is MTFASFLINFYSVIPRLNFKFHWTNDVFNLEWSSEYFQALAL. A helical transmembrane segment spans residues 43–63; the sequence is VACLGAAVSLLLLVTIIIVWI. The Cytoplasmic portion of the chain corresponds to 64–82; it reads CQACHKNETTGKTRRRVRR. Residues 83 to 103 traverse the membrane as a helical segment; that stretch reads LSTVLFIISVLCFFMLGVCLF. The Extracellular segment spans residues 104-217; it reads ANEHVNRGMS…VLSLYESERW (114 aa). N-linked (GlcNAc...) asparagine glycosylation is found at asparagine 142, asparagine 163, and asparagine 176. A helical membrane pass occupies residues 218 to 238; the sequence is AFLVILLSITMVVLFTGVVAF. Residues 239–245 are Cytoplasmic-facing; it reads CKQSKKG. Residues 246–266 traverse the membrane as a helical segment; that stretch reads AVVFSAIGFFIFVVVWLLISI. Topologically, residues 267–395 are extracellular; the sequence is SLPLTIALAD…GTCNQSVAGM (129 aa). N-linked (GlcNAc...) asparagine glycosylation is found at asparagine 328, asparagine 341, asparagine 348, and asparagine 389. Residues 396–416 form a helical membrane-spanning segment; that stretch reads SIYMLSILLLGVFLFILLIVV. Over 417-519 the chain is Cytoplasmic; that stretch reads SKTWNLFSRL…YNNYEDRYNM (103 aa). Residues 459 to 485 form a disordered region; the sequence is YNPRTRDRTEPSTNTTSGTADEPNAPL.

Belongs to the tweety family.

The protein localises to the cell membrane. In terms of biological role, probable chloride channel. This chain is Protein tweety homolog 1 (ttyh-1), found in Caenorhabditis elegans.